A 112-amino-acid chain; its full sequence is Protein Churchill (112 aa).

The Zn(2+) site is built by cysteine 2, cysteine 5, cysteine 30, cysteine 33, histidine 59, cysteine 61, cysteine 64, histidine 66, histidine 71, cysteine 88, and cysteine 91.

Belongs to the Churchill family.

Its function is as follows. Transcriptional activator that mediates FGF signaling during neural development. Plays a role in the regulation of cell movement. Does not bind DNA by itself. The chain is Protein Churchill (Churc1) from Mus musculus (Mouse).